The following is a 617-amino-acid chain: Diacylglycerol O-acyltransferase 1 (617 aa).

2 disordered regions span residues 1–52 (MEPI…ETER) and 95–186 (RNTN…PKQE). Positions 7-17 (SNGNKNNSMDK) are enriched in polar residues. Composition is skewed to low complexity over residues 18–34 (QPQQ…QQQQ) and 96–105 (NTNNNNQNNT). Positions 106-140 (SPTFSSANGKQSNLTQRKINTQIQSKQPTNNNVQP) are enriched in polar residues. Residues 160-177 (QNNNGNNNNNNNNNNNNN) are compositionally biased toward low complexity. 5 helical membrane passes run 217–237 (LLLI…HLLY), 254–274 (WPGV…YLIE), 306–326 (IIAF…ICTF), 399–419 (IVEA…YMLP), and 449–469 (YVWL…VAEI). The FYXDWWN motif signature appears at 477 to 483 (FYRDWWN). 3 consecutive transmembrane segments (helical) span residues 520-540 (GYFM…SIPF), 545-565 (LWGF…KNLM), and 570-590 (LGNV…VLLY). The active site involves His532.

Belongs to the membrane-bound acyltransferase family. Sterol o-acyltransferase subfamily.

The protein localises to the endoplasmic reticulum membrane. It catalyses the reaction an acyl-CoA + a 1,2-diacyl-sn-glycerol = a triacyl-sn-glycerol + CoA. The catalysed reaction is all-trans-retinol + an acyl-CoA = an all-trans-retinyl ester + CoA. It carries out the reaction 2-(9Z-octadecenoyl)-glycerol + (9Z)-octadecenoyl-CoA = 1,2-di-(9Z-octadecenoyl)-sn-glycerol + CoA. The enzyme catalyses 1,2-di-(9Z-octadecenoyl)-sn-glycerol + (9Z)-octadecenoyl-CoA = 1,2,3-tri-(9Z-octadecenoyl)-glycerol + CoA. It catalyses the reaction all-trans-retinol + hexadecanoyl-CoA = all-trans-retinyl hexadecanoate + CoA. The catalysed reaction is 1-O-(9Z-octadecenyl)-glycerol + (9Z)-octadecenoyl-CoA = 1-O-(9Z-octadecyl)-3-(9Z-octadecenoyl)-glycerol + CoA. It carries out the reaction 1-O-(9Z-octadecyl)-3-(9Z-octadecenoyl)-glycerol + (9Z)-octadecenoyl-CoA = 1-O-(9Z-octadecenyl)-2,3-di-(9Z-octadecenoyl)glycerol + CoA. The enzyme catalyses 1-(9Z-octadecenoyl)-glycerol + (9Z)-octadecenoyl-CoA = 1,2-di-(9Z-octadecenoyl)-glycerol + CoA. It catalyses the reaction 1,2-di-(9Z-octadecenoyl)-glycerol + (9Z)-octadecenoate + H(+) = 1,2,3-tri-(9Z-octadecenoyl)-glycerol + H2O. The catalysed reaction is 1-octadecanoyl-2-(5Z,8Z,11Z,14Z-eicosatetraenoyl)-sn-glycerol + (9Z)-octadecenoyl-CoA = 1-octadecanoyl-2-(5Z,8Z,11Z,14Z)-eicosatetraenoyl-3-(9Z)-octadecenoyl-sn-glycerol + CoA. It carries out the reaction hexadecane-1,2-diol + 2 hexadecanoyl-CoA = 1,2-O,O-dihexadecanoyl-1,2-hexadecanediol + 2 CoA. The enzyme catalyses hexadecane-1,2-diol + hexadecanoyl-CoA = 2-hydroxyhexadecyl hexadecanoate + CoA. It catalyses the reaction 2-(9Z-octadecenoyl)-glycerol + hexadecanoyl-CoA = 1-hexadecanoyl-2-(9Z-octadecenoyl)-sn-glycerol + CoA. The catalysed reaction is 1,2-di-(9Z-octadecenoyl)-sn-glycerol + hexadecanoyl-CoA = 1,2-di-(9Z)-octadecenoyl-3-hexadecanoyl-sn-glycerol + CoA. It carries out the reaction hexadecan-1-ol + hexadecanoyl-CoA = hexadecanyl hexadecanoate + CoA. The enzyme catalyses 13-cis-retinol + hexadecanoyl-CoA = 13-cis-retinyl hexadecanoate + CoA. It catalyses the reaction 1,3-di-(9Z-octadecenoyl)-glycerol + (9Z)-octadecenoyl-CoA = 1,2,3-tri-(9Z-octadecenoyl)-glycerol + CoA. The catalysed reaction is 2,3-di-(9Z)-octadecenoyl-sn-glycerol + (9Z)-octadecenoyl-CoA = 1,2,3-tri-(9Z-octadecenoyl)-glycerol + CoA. The protein operates within lipid metabolism; glycerolipid metabolism. Catalyzes the terminal and only committed step in triacylglycerol synthesis by using diacylglycerol and fatty acyl CoA as substrates. The protein is Diacylglycerol O-acyltransferase 1 (dgat1) of Dictyostelium discoideum (Social amoeba).